Reading from the N-terminus, the 154-residue chain is Putative lipoprotein MAB_4074c (154 aa).

The N-terminal stretch at 1–21 (MMNRVIVGAMGLLAAGAVVVG) is a signal peptide. C22 carries N-palmitoyl cysteine lipidation. A lipid anchor (S-diacylglycerol cysteine) is attached at C22.

It belongs to the mycobacterial 19 kDa antigen family.

The protein localises to the cell membrane. This is Putative lipoprotein MAB_4074c from Mycobacteroides abscessus (strain ATCC 19977 / DSM 44196 / CCUG 20993 / CIP 104536 / JCM 13569 / NCTC 13031 / TMC 1543 / L948) (Mycobacterium abscessus).